The following is a 129-amino-acid chain: Large ribosomal subunit protein bL20 (129 aa).

This sequence belongs to the bacterial ribosomal protein bL20 family.

In terms of biological role, binds directly to 23S ribosomal RNA and is necessary for the in vitro assembly process of the 50S ribosomal subunit. It is not involved in the protein synthesizing functions of that subunit. The chain is Large ribosomal subunit protein bL20 from Mycobacterium marinum (strain ATCC BAA-535 / M).